A 232-amino-acid chain; its full sequence is tRNA (guanine-N(1)-)-methyltransferase (232 aa).

S-adenosyl-L-methionine is bound by residues glycine 111 and 131-136; that span reads IGDYIL.

The protein belongs to the RNA methyltransferase TrmD family. Homodimer.

It is found in the cytoplasm. It carries out the reaction guanosine(37) in tRNA + S-adenosyl-L-methionine = N(1)-methylguanosine(37) in tRNA + S-adenosyl-L-homocysteine + H(+). In terms of biological role, specifically methylates guanosine-37 in various tRNAs. The protein is tRNA (guanine-N(1)-)-methyltransferase of Bartonella henselae (strain ATCC 49882 / DSM 28221 / CCUG 30454 / Houston 1) (Rochalimaea henselae).